Reading from the N-terminus, the 336-residue chain is Galactose/methyl galactoside import permease protein MglC (336 aa).

8 helical membrane-spanning segments follow: residues A17 to L37, L53 to G73, V107 to I127, A128 to F148, F181 to W201, L231 to G251, T257 to V277, and I306 to A326.

It belongs to the binding-protein-dependent transport system permease family. AraH/RbsC subfamily. The complex is composed of one ATP-binding protein (MglA), two transmembrane proteins (MglC) and a solute-binding protein (MglB).

It localises to the cell inner membrane. Its function is as follows. Part of the ABC transporter complex MglABC involved in galactose/methyl galactoside import. Probably responsible for the translocation of the substrate across the membrane. This is Galactose/methyl galactoside import permease protein MglC (mglC) from Haemophilus influenzae (strain ATCC 51907 / DSM 11121 / KW20 / Rd).